A 172-amino-acid polypeptide reads, in one-letter code: MORN repeat-containing protein 5 (172 aa).

MORN repeat units lie at residues 8-30, 31-53, and 54-75; these read YIGE…TETK, YIGE…NGSR, and FDAV…DGLQ.

It localises to the cell projection. The protein localises to the cilium. The protein resides in the flagellum. The chain is MORN repeat-containing protein 5 (MORN5) from Bos taurus (Bovine).